The sequence spans 378 residues: Homeobox protein Meis3 (378 aa).

Positions 24–57 (FSEAAPSVPRAPGPYTPHRPPQLQAPGLDSDSLK) are disordered. Pro residues predominate over residues 32-43 (PRAPGPYTPHRP). The MEIS N-terminal domain maps to 99-182 (GGDVCSSDSF…PIDLVIEDRD (84 aa)). The interval 203–265 (NTTWIRDHED…DEDLDLERRR (63 aa)) is disordered. Residues 230-244 (SQSGDNSSDQGDGLD) show a composition bias toward low complexity. Residues 265 to 327 (RNKKRGIFPK…NARRRIVQPM (63 aa)) constitute a DNA-binding region (homeobox; TALE-type).

Belongs to the TALE/MEIS homeobox family. As to expression, expressed at high levels in the brain. Significant expression also observed in the heart, spleen and lung. Expressed in pancreatic islets (beta-cells and non-beta-cells).

Its subcellular location is the nucleus. Transcriptional regulator which directly modulates PDPK1 expression, thus promoting survival of pancreatic beta-cells. Also regulates expression of NDFIP1, BNIP3, and CCNG1. This is Homeobox protein Meis3 (Meis3) from Mus musculus (Mouse).